Here is a 170-residue protein sequence, read N- to C-terminus: MDVTIQHPWFKRALGPFYPSRLFDQFFGEGLFEYDLLPFLSSTISPYYRQSLFRTALDSGISEVRSDRDRFVILLDVKHFSPEDLTVKVLDDFVEIHGKHNERQDDHGYISREFHRRYRLPTAVDQSALSCSLSADGMLTFSGPKLVDPSHGERTIPVSREEKPSSAPSS.

Position 1 is an N-acetylmethionine (Met1). The tract at residues 1–63 is required for complex formation with BFSP1 and BFSP2; sequence MDVTIQHPWF…RTALDSGISE (63 aa). Gln6 carries the post-translational modification Deamidated glutamine; partial. A Phosphoserine modification is found at Ser45. A Deamidated glutamine; partial modification is found at Gln50. Residues 52 to 161 enclose the sHSP domain; sequence LFRTALDSGI…GERTIPVSRE (110 aa). The residue at position 99 (Lys99) is an N6-acetyllysine. His100 is a Zn(2+) binding site. At Asn101 the chain carries Deamidated asparagine; partial. Residues Glu102, His107, and His151 each coordinate Zn(2+). The disordered stretch occupies residues 144 to 170; sequence PKLVDPSHGERTIPVSREEKPSSAPSS. The segment covering 148–164 has biased composition (basic and acidic residues); sequence DPSHGERTIPVSREEKP. Ser159 is a glycosylation site (O-linked (GlcNAc) serine).

It belongs to the small heat shock protein (HSP20) family. As to quaternary structure, heteromer composed of three CRYAA and one CRYAB subunits. Inter-subunit bridging via zinc ions enhances stability, which is crucial as there is no protein turn over in the lens. Can also form homodimers and homotetramers (dimers of dimers) which serve as the building blocks of homooligomers. Within homooligomers, the zinc-binding motif is created from residues of 3 different molecules. His-100 and Glu-102 from one molecule are ligands of the zinc ion, and His-107 and His-151 residues from additional molecules complete the site with tetrahedral coordination geometry. Part of a complex required for lens intermediate filament formation composed of BFSP1, BFSP2 and CRYAA. Post-translationally, acetylation at Lys-99 may increase chaperone activity. Undergoes age-dependent proteolytical cleavage at the C-terminus.

It is found in the cytoplasm. The protein localises to the nucleus. Its function is as follows. Contributes to the transparency and refractive index of the lens. Acts as a chaperone, preventing aggregation of various proteins under a wide range of stress conditions. Required for the correct formation of lens intermediate filaments as part of a complex composed of BFSP1, BFSP2 and CRYAA. This Tamandua mexicana (Northern Tamandua) protein is Alpha-crystallin A chain (CRYAA).